The following is a 155-amino-acid chain: Small ribosomal subunit protein uS7cz/uS7cy (155 aa).

The protein belongs to the universal ribosomal protein uS7 family. Part of the 30S ribosomal subunit.

The protein localises to the plastid. It is found in the chloroplast. Functionally, one of the primary rRNA binding proteins, it binds directly to 16S rRNA where it nucleates assembly of the head domain of the 30S subunit. This chain is Small ribosomal subunit protein uS7cz/uS7cy (rps7-A), found in Ipomoea purpurea (Common morning glory).